A 113-amino-acid polypeptide reads, in one-letter code: Large ribosomal subunit protein uL22 (113 aa).

The protein belongs to the universal ribosomal protein uL22 family. In terms of assembly, part of the 50S ribosomal subunit.

In terms of biological role, this protein binds specifically to 23S rRNA; its binding is stimulated by other ribosomal proteins, e.g. L4, L17, and L20. It is important during the early stages of 50S assembly. It makes multiple contacts with different domains of the 23S rRNA in the assembled 50S subunit and ribosome. Functionally, the globular domain of the protein is located near the polypeptide exit tunnel on the outside of the subunit, while an extended beta-hairpin is found that lines the wall of the exit tunnel in the center of the 70S ribosome. The sequence is that of Large ribosomal subunit protein uL22 from Desulforudis audaxviator (strain MP104C).